Reading from the N-terminus, the 355-residue chain is Beta-ketoacyl-[acyl-carrier-protein] synthase III (355 aa).

Catalysis depends on residues C122 and H280. The tract at residues 281–285 (QANMR) is ACP-binding. Residue N311 is part of the active site.

This sequence belongs to the thiolase-like superfamily. FabH family. Homodimer.

It is found in the cytoplasm. It carries out the reaction malonyl-[ACP] + acetyl-CoA + H(+) = 3-oxobutanoyl-[ACP] + CO2 + CoA. It functions in the pathway lipid metabolism; fatty acid biosynthesis. In terms of biological role, catalyzes the condensation reaction of fatty acid synthesis by the addition to an acyl acceptor of two carbons from malonyl-ACP. Catalyzes the first condensation reaction which initiates fatty acid synthesis and may therefore play a role in governing the total rate of fatty acid production. Possesses both acetoacetyl-ACP synthase and acetyl transacylase activities. Its substrate specificity determines the biosynthesis of branched-chain and/or straight-chain of fatty acids. The chain is Beta-ketoacyl-[acyl-carrier-protein] synthase III from Kocuria rhizophila (strain ATCC 9341 / DSM 348 / NBRC 103217 / DC2201).